A 243-amino-acid chain; its full sequence is uncharacterized protein (243 aa).

Belongs to the methyltransferase superfamily.

This is an uncharacterized protein from Mycobacterium tuberculosis (strain CDC 1551 / Oshkosh).